We begin with the raw amino-acid sequence, 430 residues long: Protein translocase subunit SecY (430 aa).

10 consecutive transmembrane segments (helical) span residues 18–38 (VIFTLLMLIVFRIGSFIPVPG), 67–87 (FSIFAMGIMPYITASIVMQLL), 118–138 (IVLGFIQALGMSVGFNNFFPG), 145–165 (VSVYLFIALVLTAGTAFLMWL), 177–197 (GISIIIFAGIAAGIPNGLNLI), 213–233 (IVVILLLALAILAIIVGVIFV), 270–290 (VIPVIFALSLFIFPPTVAGLF), 309–329 (PIGMAVYALLIIGFTYFYTFI), 369–389 (FVGSLFLAVVAILPVFFIKFA), and 390–410 (DLPQAIQIGGTGLLIVVGVAL).

Belongs to the SecY/SEC61-alpha family. In terms of assembly, component of the Sec protein translocase complex. Heterotrimer consisting of SecY, SecE and SecG subunits. The heterotrimers can form oligomers, although 1 heterotrimer is thought to be able to translocate proteins. Interacts with the ribosome. Interacts with SecDF, and other proteins may be involved. Interacts with SecA.

The protein resides in the cell membrane. The central subunit of the protein translocation channel SecYEG. Consists of two halves formed by TMs 1-5 and 6-10. These two domains form a lateral gate at the front which open onto the bilayer between TMs 2 and 7, and are clamped together by SecE at the back. The channel is closed by both a pore ring composed of hydrophobic SecY resides and a short helix (helix 2A) on the extracellular side of the membrane which forms a plug. The plug probably moves laterally to allow the channel to open. The ring and the pore may move independently. The chain is Protein translocase subunit SecY from Halalkalibacterium halodurans (strain ATCC BAA-125 / DSM 18197 / FERM 7344 / JCM 9153 / C-125) (Bacillus halodurans).